The chain runs to 337 residues: ELAV-like protein 1-A (337 aa).

RRM domains follow at residues 20–109, 117–197, and 255–333; these read TNLI…FARP, ANLY…FAAN, and WCIF…FKTS.

The protein belongs to the RRM elav family. Interacts (via RRM3) with cirbp. Unable to form oligomers. Part of a ribonucleoprotein (RNP) complex, at least composed of elavl1/elrA and/or elavl2/elrB, igf2bp3/vg1RBP, ddx6/Xp54, ybx2/frgy2, lsm14b/rap55b and, in a subset of RNP complexes, stau1/staufen. As to expression, ubiquitously expressed in adults.

It is found in the cytoplasm. The protein localises to the cell cortex. Functionally, RNA-binding protein that binds to the 3'-UTR region of mRNAs and increases their stability. Involved in embryonic stem cells (ESCs) differentiation: preferentially binds mRNAs that are not methylated by N6-methyladenosine (m6A), stabilizing them, promoting ESCs differentiation. Binds to poly-U elements and AU-rich elements (AREs) in the 3'-UTR of target mRNAs. May be involved in cytoplasmic mRNA polyadenylation. Acts cooperatively with cribp to stabilize AU-rich sequence (ARE)-containing mRNAs. May play a role during gastrulation. Required for the vegetal localization of vg1 mRNA. This is ELAV-like protein 1-A (elavl1-a) from Xenopus laevis (African clawed frog).